Consider the following 322-residue polypeptide: Cell division control protein 10 (322 aa).

An N-acetylmethionine modification is found at M1. The region spanning 29 to 302 (KGFQFNIMVV…EGFRARQLIA (274 aa)) is the Septin-type G domain. The tract at residues 39–46 (GQSGLGKS) is G1 motif. GTP contacts are provided by residues 39-46 (GQSGLGKS), T74, G100, and 180-188 (KSDTLTLDE). The tract at residues 97 to 100 (DTPG) is G3 motif. The tract at residues 179-182 (GKSD) is G4 motif. Residue T216 is modified to Phosphothreonine. GTP is bound by residues G236 and R251.

This sequence belongs to the TRAFAC class TrmE-Era-EngA-EngB-Septin-like GTPase superfamily. Septin GTPase family. As to quaternary structure, component of the septin complex which consists of CDC3, CDC10, CDC11, CDC12 and probably SHS1 and rearranges to a cortical collar of highly ordered filaments at the mother-bud-neck. A complex formed by CDC3, CDC10, CDC11 and CDC12 is capable of forming long filaments in vitro and the components seem to be present in a 2:2:2:2 arrangement in vivo. The filaments are proposed to be formed by the end-to-end polymerization of CDC3-CDC12-CDC11 complexes with CDC10 serving as a bridge to bundle the polymers into paired filaments. Component of the GIN4 complex composed of at least BNI5, CDC3, CDC10, CDC11, CDC12, GIN4, NAP1 and SHS1. Self-associates. Interacts with SYP1.

Its subcellular location is the membrane. It localises to the bud neck. In terms of biological role, septins are GTPases involved in cytokinesis that assemble early in the cell cycle as a patch at the incipient bud site and form a ring approximate 15 minutes before bud emergence, which transforms into an hour-glass shaped collar of cortical filaments that spans both sides of the mother-bud neck. This collar persists until just before cytokinesis, when it splits into two rings that occupy opposite sides of the neck. The septins at the bud neck serve as a structural scaffold that recruits different components involved in diverse processes at specific stages during the cell cycle. Many proteins bind asymmetrically to the septin collar. The septin assembly is regulated by protein kinases GIN4 and/or CLA4. May act by recruiting MYO1 and HOF1, a protein involved in septation, to the site of cleavage. Septins are also involved in cell morphogenesis, bud site selection, chitin deposition, cell cycle regulation, cell compartmentalization and spore wall formation. This Saccharomyces cerevisiae (strain ATCC 204508 / S288c) (Baker's yeast) protein is Cell division control protein 10 (CDC10).